The sequence spans 381 residues: Alkanesulfonate monooxygenase (381 aa).

It belongs to the SsuD family. Homotetramer.

The enzyme catalyses an alkanesulfonate + FMNH2 + O2 = an aldehyde + FMN + sulfite + H2O + 2 H(+). Functionally, catalyzes the desulfonation of aliphatic sulfonates. This chain is Alkanesulfonate monooxygenase, found in Escherichia coli O9:H4 (strain HS).